A 383-amino-acid chain; its full sequence is Acetylornithine deacetylase (383 aa).

His80 contacts Zn(2+). The active site involves Asp82. Asp112 contributes to the Zn(2+) binding site. Glu144 is a catalytic residue. Positions 145, 169, and 355 each coordinate Zn(2+).

Belongs to the peptidase M20A family. ArgE subfamily. Homodimer. The cofactor is Zn(2+). Co(2+) serves as cofactor. It depends on glutathione as a cofactor.

It is found in the cytoplasm. The enzyme catalyses N(2)-acetyl-L-ornithine + H2O = L-ornithine + acetate. The protein operates within amino-acid biosynthesis; L-arginine biosynthesis; L-ornithine from N(2)-acetyl-L-ornithine (linear): step 1/1. Catalyzes the hydrolysis of the amide bond of N(2)-acetylated L-amino acids. Cleaves the acetyl group from N-acetyl-L-ornithine to form L-ornithine, an intermediate in L-arginine biosynthesis pathway, and a branchpoint in the synthesis of polyamines. This is Acetylornithine deacetylase from Erwinia tasmaniensis (strain DSM 17950 / CFBP 7177 / CIP 109463 / NCPPB 4357 / Et1/99).